We begin with the raw amino-acid sequence, 345 residues long: Beta-hexosaminidase (345 aa).

Residues aspartate 60, arginine 68, arginine 132, and 162 to 163 (KH) each bind substrate. Catalysis depends on histidine 175, which acts as the Proton donor/acceptor. Aspartate 247 functions as the Nucleophile in the catalytic mechanism.

This sequence belongs to the glycosyl hydrolase 3 family. NagZ subfamily.

It localises to the cytoplasm. It carries out the reaction Hydrolysis of terminal non-reducing N-acetyl-D-hexosamine residues in N-acetyl-beta-D-hexosaminides.. The protein operates within cell wall biogenesis; peptidoglycan recycling. Plays a role in peptidoglycan recycling by cleaving the terminal beta-1,4-linked N-acetylglucosamine (GlcNAc) from peptide-linked peptidoglycan fragments, giving rise to free GlcNAc, anhydro-N-acetylmuramic acid and anhydro-N-acetylmuramic acid-linked peptides. This chain is Beta-hexosaminidase, found in Actinobacillus pleuropneumoniae serotype 5b (strain L20).